The following is a 336-amino-acid chain: uncharacterized protein (336 aa).

The N-terminal stretch at 1 to 21 (MSELVLITGITGFVASHSAEA) is a signal peptide. An NADP(+)-binding site is contributed by lysine 38. Position 153 is a phosphothreonine (threonine 153). Tyrosine 167 serves as a coordination point for NADP(+).

The protein belongs to the NAD(P)-dependent epimerase/dehydratase family. Dihydroflavonol-4-reductase subfamily.

This is an uncharacterized protein from Schizosaccharomyces pombe (strain 972 / ATCC 24843) (Fission yeast).